The primary structure comprises 329 residues: Putative methylthioribose-1-phosphate isomerase (329 aa).

Substrate is bound by residues 50–52, R84, and Q182; that span reads RGA. D223 functions as the Proton donor in the catalytic mechanism. 233–234 provides a ligand contact to substrate; it reads NK.

The protein belongs to the eIF-2B alpha/beta/delta subunits family. MtnA subfamily.

It catalyses the reaction 5-(methylsulfanyl)-alpha-D-ribose 1-phosphate = 5-(methylsulfanyl)-D-ribulose 1-phosphate. Its function is as follows. Catalyzes the interconversion of methylthioribose-1-phosphate (MTR-1-P) into methylthioribulose-1-phosphate (MTRu-1-P). The polypeptide is Putative methylthioribose-1-phosphate isomerase (Methanocaldococcus jannaschii (strain ATCC 43067 / DSM 2661 / JAL-1 / JCM 10045 / NBRC 100440) (Methanococcus jannaschii)).